The following is a 103-amino-acid chain: Alpha-ketoglutarate dehydrogenase component 4 (103 aa).

Met-1 carries the N-acetylmethionine modification. Position 5 is an N6-succinyllysine (Lys-5). The tract at residues 20-69 (TPLIRFPDRRDNPKPNVSEALRSAGLPSHSSVISQHSKGSKSPDLLMYQG) is disordered. Positions 47–56 (SHSSVISQHS) are enriched in polar residues. Phosphoserine occurs at positions 49, 61, and 90.

This sequence belongs to the alpha-ketoglutarate dehydrogenase component 4 family. In terms of assembly, component of the 2-oxoglutarate dehydrogenase complex (OGDHC), composed of OGDH (2-oxoglutarate dehydrogenase; also called E1 subunit), DLST (dihydrolipoamide succinyltransferase; also called E2 subunit) and DLD (dihydrolipoamide dehydrogenase; also called E3 subunit), and the assembly factor KGD4. Within OGDHC complex, interacts (via N-terminus) with E3 subunit and (via C-terminus) with E2 subunit.

The protein resides in the mitochondrion. Molecular adapter that is necessary to form a stable 2-oxoglutarate dehydrogenase enzyme complex (OGDHC). Enables the specific recruitment of E3 subunit to E2 subunit in the 2-oxoglutarate dehydrogenase complex (OGDHC). This is Alpha-ketoglutarate dehydrogenase component 4 from Homo sapiens (Human).